Here is a 141-residue protein sequence, read N- to C-terminus: Transmembrane protein 216 (141 aa).

The next 4 helical transmembrane spans lie at 15–35, 49–69, 82–102, and 115–135; these read ILFFLNGWYYATYFLLELLIF, LVLDVVMLLLYLGIEVIRLFF, LGISVALTFPSAMMASYYLLL, and SILLFFCGSELLLEMLTLATF.

As to quaternary structure, part of the tectonic-like complex (also named B9 complex). Interacts with TMEM107.

It localises to the membrane. The protein localises to the cytoplasm. Its subcellular location is the cytoskeleton. It is found in the cilium basal body. Part of the tectonic-like complex which is required for tissue-specific ciliogenesis and may regulate ciliary membrane composition. The polypeptide is Transmembrane protein 216 (Tmem216) (Rattus norvegicus (Rat)).